We begin with the raw amino-acid sequence, 105 residues long: Small ribosomal subunit protein uS17 (105 aa).

Belongs to the universal ribosomal protein uS17 family. Part of the 30S ribosomal subunit.

Its function is as follows. One of the primary rRNA binding proteins, it binds specifically to the 5'-end of 16S ribosomal RNA. The protein is Small ribosomal subunit protein uS17 of Thermus aquaticus.